We begin with the raw amino-acid sequence, 228 residues long: Lipoprotein-releasing system ATP-binding protein LolD (228 aa).

The 222-residue stretch at 6–227 (LELLGIDRTY…LKDGKLIDYV (222 aa)) folds into the ABC transporter domain. ATP is bound at residue 42-49 (GPSGSGKS).

It belongs to the ABC transporter superfamily. Lipoprotein translocase (TC 3.A.1.125) family. In terms of assembly, the complex is composed of two ATP-binding proteins (LolD) and two transmembrane proteins (LolC and LolE).

Its subcellular location is the cell inner membrane. Its function is as follows. Part of the ABC transporter complex LolCDE involved in the translocation of mature outer membrane-directed lipoproteins, from the inner membrane to the periplasmic chaperone, LolA. Responsible for the formation of the LolA-lipoprotein complex in an ATP-dependent manner. The chain is Lipoprotein-releasing system ATP-binding protein LolD from Hyphomonas neptunium (strain ATCC 15444).